The following is a 96-amino-acid chain: Putative septation protein SpoVG (96 aa).

It belongs to the SpoVG family.

Essential for sporulation. Interferes with or is a negative regulator of the pathway leading to asymmetric septation. This Priestia megaterium (Bacillus megaterium) protein is Putative septation protein SpoVG.